We begin with the raw amino-acid sequence, 242 residues long: tRNA (guanine-N(1)-)-methyltransferase (242 aa).

Residues Gly-109 and 129-134 (LGDFVL) each bind S-adenosyl-L-methionine.

This sequence belongs to the RNA methyltransferase TrmD family. Homodimer.

The protein resides in the cytoplasm. The catalysed reaction is guanosine(37) in tRNA + S-adenosyl-L-methionine = N(1)-methylguanosine(37) in tRNA + S-adenosyl-L-homocysteine + H(+). Specifically methylates guanosine-37 in various tRNAs. This chain is tRNA (guanine-N(1)-)-methyltransferase, found in Exiguobacterium sibiricum (strain DSM 17290 / CCUG 55495 / CIP 109462 / JCM 13490 / 255-15).